The chain runs to 55 residues: ATP synthase F(0) complex subunit 8 (55 aa).

A helical membrane pass occupies residues 4 to 24 (LNPSPWFIILLFSWVIFMVIL).

It belongs to the ATPase protein 8 family. In terms of assembly, component of the ATP synthase complex composed at least of ATP5F1A/subunit alpha, ATP5F1B/subunit beta, ATP5MC1/subunit c (homooctomer), MT-ATP6/subunit a, MT-ATP8/subunit 8, ATP5ME/subunit e, ATP5MF/subunit f, ATP5MG/subunit g, ATP5MK/subunit k, ATP5MJ/subunit j, ATP5F1C/subunit gamma, ATP5F1D/subunit delta, ATP5F1E/subunit epsilon, ATP5PF/subunit F6, ATP5PB/subunit b, ATP5PD/subunit d, ATP5PO/subunit OSCP. ATP synthase complex consists of a soluble F(1) head domain (subunits alpha(3) and beta(3)) - the catalytic core - and a membrane F(0) domain - the membrane proton channel (subunits c, a, 8, e, f, g, k and j). These two domains are linked by a central stalk (subunits gamma, delta, and epsilon) rotating inside the F1 region and a stationary peripheral stalk (subunits F6, b, d, and OSCP).

The protein localises to the mitochondrion membrane. Functionally, subunit 8, of the mitochondrial membrane ATP synthase complex (F(1)F(0) ATP synthase or Complex V) that produces ATP from ADP in the presence of a proton gradient across the membrane which is generated by electron transport complexes of the respiratory chain. ATP synthase complex consist of a soluble F(1) head domain - the catalytic core - and a membrane F(1) domain - the membrane proton channel. These two domains are linked by a central stalk rotating inside the F(1) region and a stationary peripheral stalk. During catalysis, ATP synthesis in the catalytic domain of F(1) is coupled via a rotary mechanism of the central stalk subunits to proton translocation. In vivo, can only synthesize ATP although its ATP hydrolase activity can be activated artificially in vitro. Part of the complex F(0) domain. The chain is ATP synthase F(0) complex subunit 8 from Scyliorhinus canicula (Small-spotted catshark).